The following is a 166-amino-acid chain: Large ribosomal subunit protein uL10 (166 aa).

It belongs to the universal ribosomal protein uL10 family. Part of the ribosomal stalk of the 50S ribosomal subunit. The N-terminus interacts with L11 and the large rRNA to form the base of the stalk. The C-terminus forms an elongated spine to which L12 dimers bind in a sequential fashion forming a multimeric L10(L12)X complex.

In terms of biological role, forms part of the ribosomal stalk, playing a central role in the interaction of the ribosome with GTP-bound translation factors. This Neisseria meningitidis serogroup A / serotype 4A (strain DSM 15465 / Z2491) protein is Large ribosomal subunit protein uL10 (rplJ).